Here is a 403-residue protein sequence, read N- to C-terminus: Argininosuccinate synthase (403 aa).

Position 10–18 (10–18 (AYSGGLDTS)) interacts with ATP. L-citrulline is bound at residue Tyr87. Residue Gly117 coordinates ATP. Thr119, Asn123, and Asp124 together coordinate L-aspartate. Asn123 serves as a coordination point for L-citrulline. L-citrulline contacts are provided by Arg127, Ser175, Ser184, Glu260, and Tyr272.

This sequence belongs to the argininosuccinate synthase family. Type 1 subfamily. In terms of assembly, homotetramer.

It is found in the cytoplasm. It catalyses the reaction L-citrulline + L-aspartate + ATP = 2-(N(omega)-L-arginino)succinate + AMP + diphosphate + H(+). Its pathway is amino-acid biosynthesis; L-arginine biosynthesis; L-arginine from L-ornithine and carbamoyl phosphate: step 2/3. This chain is Argininosuccinate synthase, found in Bacillus pumilus (strain SAFR-032).